We begin with the raw amino-acid sequence, 181 residues long: Peptidyl-tRNA hydrolase (181 aa).

Residue Tyr14 participates in tRNA binding. Residue His19 is the Proton acceptor of the active site. Tyr62, Asn64, and Asn108 together coordinate tRNA.

The protein belongs to the PTH family. As to quaternary structure, monomer.

The protein localises to the cytoplasm. It carries out the reaction an N-acyl-L-alpha-aminoacyl-tRNA + H2O = an N-acyl-L-amino acid + a tRNA + H(+). Hydrolyzes ribosome-free peptidyl-tRNAs (with 1 or more amino acids incorporated), which drop off the ribosome during protein synthesis, or as a result of ribosome stalling. Its function is as follows. Catalyzes the release of premature peptidyl moieties from peptidyl-tRNA molecules trapped in stalled 50S ribosomal subunits, and thus maintains levels of free tRNAs and 50S ribosomes. This chain is Peptidyl-tRNA hydrolase, found in Campylobacter jejuni (strain RM1221).